The chain runs to 963 residues: Ubiquitin carboxyl-terminal hydrolase 11 (963 aa).

The segment at 64–93 (VTEDREPQHEELPGLDSQWRQIENGESGRE) is disordered. A compositionally biased stretch (basic and acidic residues) spans 65 to 75 (TEDREPQHEEL). Residues 76–184 (PGLDSQWRQI…GQPPIERKVI (109 aa)) form the DUSP domain. K245 carries the post-translational modification N6-acetyllysine. In terms of domain architecture, USP spans 309–930 (CGLTNLGNTC…AAYVLFYQRQ (622 aa)). The Nucleophile role is filled by C318. Disordered regions lie at residues 644–691 (TKPN…SGVT) and 716–735 (LFTL…TSPE). S648 bears the Phosphoserine mark. Over residues 649–665 (DDEDDGDEKEDDEEDKD) the composition is skewed to acidic residues. The segment covering 717–731 (FTLQTVNSNGTSDRT) has biased composition (polar residues). Phosphoserine is present on S733. The active-site Proton acceptor is the H888. The segment covering 938 to 957 (SPAGSSGAPASPACSSPPSS) has biased composition (low complexity). The tract at residues 938 to 963 (SPAGSSGAPASPACSSPPSSEFMDVN) is disordered. S948 carries the phosphoserine modification.

It belongs to the peptidase C19 family. As to quaternary structure, monomer. Associated component of the Polycomb group (PcG) multiprotein PRC1-like complex. Interacts with RANBP9/RANBPM. Interacts with BRCA2. Interacts with CHUK/IKKA. Interacts with NFKBIA. Interacts with SPRY3, RAE1, MYCBP2/PAM, and KCTD6. (Microbial infection) Interacts with papilloma virus protein 16E7.

It localises to the nucleus. Its subcellular location is the cytoplasm. The protein localises to the chromosome. The catalysed reaction is Thiol-dependent hydrolysis of ester, thioester, amide, peptide and isopeptide bonds formed by the C-terminal Gly of ubiquitin (a 76-residue protein attached to proteins as an intracellular targeting signal).. Protease that can remove conjugated ubiquitin from target proteins and polyubiquitin chains. Inhibits the degradation of target proteins by the proteasome. Cleaves preferentially 'Lys-6' and 'Lys-63'-linked ubiquitin chains. Has lower activity with 'Lys-11' and 'Lys-33'-linked ubiquitin chains, and extremely low activity with 'Lys-27', 'Lys-29' and 'Lys-48'-linked ubiquitin chains (in vitro). Plays a role in the regulation of pathways leading to NF-kappa-B activation. Plays a role in the regulation of DNA repair after double-stranded DNA breaks. Acts as a chromatin regulator via its association with the Polycomb group (PcG) multiprotein PRC1-like complex; may act by deubiquitinating components of the PRC1-like complex. Promotes cell proliferation by deubiquitinating phosphorylated E2F1. The polypeptide is Ubiquitin carboxyl-terminal hydrolase 11 (USP11) (Homo sapiens (Human)).